Consider the following 295-residue polypeptide: UDP-N-acetylenolpyruvoylglucosamine reductase (295 aa).

One can recognise an FAD-binding PCMH-type domain in the interval Lys23–Gly188. Residue Arg167 is part of the active site. Ser217 serves as the catalytic Proton donor. Glu287 is an active-site residue.

It belongs to the MurB family. It depends on FAD as a cofactor.

The protein localises to the cytoplasm. It catalyses the reaction UDP-N-acetyl-alpha-D-muramate + NADP(+) = UDP-N-acetyl-3-O-(1-carboxyvinyl)-alpha-D-glucosamine + NADPH + H(+). It participates in cell wall biogenesis; peptidoglycan biosynthesis. Its function is as follows. Cell wall formation. This is UDP-N-acetylenolpyruvoylglucosamine reductase from Streptococcus pyogenes serotype M28 (strain MGAS6180).